The chain runs to 838 residues: Valine--tRNA ligase (838 aa).

The short motif at 46 to 56 (PNLTGTLHIGH) is the 'HIGH' region element. The short motif at 514–518 (KMSKS) is the 'KMSKS' region element. K517 serves as a coordination point for ATP. A coiled-coil region spans residues 768–838 (VDNAANNLAH…HLIAKLTKAE (71 aa)).

It belongs to the class-I aminoacyl-tRNA synthetase family. ValS type 1 subfamily. As to quaternary structure, monomer.

Its subcellular location is the cytoplasm. It carries out the reaction tRNA(Val) + L-valine + ATP = L-valyl-tRNA(Val) + AMP + diphosphate. Catalyzes the attachment of valine to tRNA(Val). As ValRS can inadvertently accommodate and process structurally similar amino acids such as threonine, to avoid such errors, it has a 'posttransfer' editing activity that hydrolyzes mischarged Thr-tRNA(Val) in a tRNA-dependent manner. The sequence is that of Valine--tRNA ligase from Mycoplasma pneumoniae (strain ATCC 29342 / M129 / Subtype 1) (Mycoplasmoides pneumoniae).